The chain runs to 133 residues: Large ribosomal subunit protein bL19 (133 aa).

The protein belongs to the bacterial ribosomal protein bL19 family.

In terms of biological role, this protein is located at the 30S-50S ribosomal subunit interface and may play a role in the structure and function of the aminoacyl-tRNA binding site. The sequence is that of Large ribosomal subunit protein bL19 from Stenotrophomonas maltophilia (strain R551-3).